Consider the following 408-residue polypeptide: Putative transporter AmpG 2 (408 aa).

The next 12 helical transmembrane spans lie at I11–T31, I49–L69, Y84–N104, T110–I130, F154–W174, V177–L197, W224–M244, I261–L281, V294–L311, I315–F337, I353–Y373, and Y382–P402.

It belongs to the major facilitator superfamily.

The protein resides in the cell inner membrane. The protein is Putative transporter AmpG 2 (ampG2) of Rickettsia typhi (strain ATCC VR-144 / Wilmington).